Here is a 108-residue protein sequence, read N- to C-terminus: Glutaredoxin-like protein YDR286C homolog (108 aa).

A disulfide bridge links Cys-22 with Cys-25.

The protein belongs to the glutaredoxin family. YDR286C subfamily.

The protein is Glutaredoxin-like protein YDR286C homolog of Dictyostelium discoideum (Social amoeba).